Reading from the N-terminus, the 475-residue chain is NADH-quinone oxidoreductase subunit N 1 (475 aa).

The next 14 helical transmembrane spans lie at 8–28, 36–56, 67–87, 100–120, 122–142, 157–177, 199–219, 244–264, 268–288, 295–315, 322–342, 366–386, 403–423, and 443–463; these read VMPLMTASGISILLILVEAAT, LFAILGFLLVFLSLPFSPSEP, GGFFTYTATVFSIGGLLITLI, GEYYIILFMAVVGMMLMSAAA, LTILFIGLELMSIALYVLAGI, FLLGAFASGIFLYGIALIYGA, FLSGIALLMIGLLFKVAAVPF, AAALSSMILVGISIAPILETF, PTAIAMIATLTMFFGNIAALI, MFAYSSIAHAGYMLIGIATGT, VLYYIFLYTLMNIGAFGIIIL, AFLMAMFMFSLAGIPPFGGFI, LAVAGVIASAVSVSYYLRVVI, and ATIALVAFLVLLFGIYPSLLI.

This sequence belongs to the complex I subunit 2 family. In terms of assembly, NDH-1 is composed of 14 different subunits. Subunits NuoA, H, J, K, L, M, N constitute the membrane sector of the complex.

Its subcellular location is the cell inner membrane. The enzyme catalyses a quinone + NADH + 5 H(+)(in) = a quinol + NAD(+) + 4 H(+)(out). Functionally, NDH-1 shuttles electrons from NADH, via FMN and iron-sulfur (Fe-S) centers, to quinones in the respiratory chain. The immediate electron acceptor for the enzyme in this species is believed to be a menaquinone. Couples the redox reaction to proton translocation (for every two electrons transferred, four hydrogen ions are translocated across the cytoplasmic membrane), and thus conserves the redox energy in a proton gradient. This is NADH-quinone oxidoreductase subunit N 1 from Chloroherpeton thalassium (strain ATCC 35110 / GB-78).